The sequence spans 312 residues: Ribonuclease Z (312 aa).

Zn(2+) contacts are provided by His-63, His-65, Asp-67, His-68, His-141, Asp-212, and His-270. Asp-67 acts as the Proton acceptor in catalysis.

The protein belongs to the RNase Z family. Homodimer. Requires Zn(2+) as cofactor.

It carries out the reaction Endonucleolytic cleavage of RNA, removing extra 3' nucleotides from tRNA precursor, generating 3' termini of tRNAs. A 3'-hydroxy group is left at the tRNA terminus and a 5'-phosphoryl group is left at the trailer molecule.. In terms of biological role, zinc phosphodiesterase, which displays some tRNA 3'-processing endonuclease activity. Probably involved in tRNA maturation, by removing a 3'-trailer from precursor tRNA. The chain is Ribonuclease Z from Latilactobacillus sakei subsp. sakei (strain 23K) (Lactobacillus sakei subsp. sakei).